The chain runs to 29 residues: Cyclotide mela-4 (29 aa).

A cross-link (cyclopeptide (Gly-Asn)) is located at residues 1–29 (GKPICGETCFKGKCYTPGCTCSYPICKKN). Disulfide bonds link Cys-5-Cys-19, Cys-9-Cys-21, and Cys-14-Cys-26.

In terms of processing, this is a cyclic peptide. Post-translationally, contains 3 disulfide bonds.

Probably participates in a plant defense mechanism (Potential). Binds to and induces leakage in phospholipd membranes, particularly ones containing 1-palmitoyl-2-oleophosphatidylethanolamine (POPE). In vitro, displays cytotoxicity against cultured cells. Not active against Gram-negative bacterium E.coli ATCC 25922 or Gram-positive bacterium S.aureus ATCC 25923 up to a concentration of 64 uM. The sequence is that of Cyclotide mela-4 from Melicytus latifolius (Norfolk Island mahoe).